A 117-amino-acid polypeptide reads, in one-letter code: Putative iron-sulfur cluster insertion protein ErpA (117 aa).

The iron-sulfur cluster site is built by Cys-45, Cys-109, and Cys-111.

It belongs to the HesB/IscA family. As to quaternary structure, homodimer. The cofactor is iron-sulfur cluster.

Functionally, required for insertion of 4Fe-4S clusters. The sequence is that of Putative iron-sulfur cluster insertion protein ErpA from Chromobacterium violaceum (strain ATCC 12472 / DSM 30191 / JCM 1249 / CCUG 213 / NBRC 12614 / NCIMB 9131 / NCTC 9757 / MK).